The following is a 278-amino-acid chain: Small ribosomal subunit protein uS3 (278 aa).

In terms of domain architecture, KH type-2 spans 39-107 (VRDFLKKRLA…PVHVNIEEVR (69 aa)). The interval 217 to 278 (VENENEARRG…DAAAVEKEVS (62 aa)) is disordered. Over residues 230-239 (PRNDAGDNRG) the composition is skewed to basic and acidic residues.

It belongs to the universal ribosomal protein uS3 family. In terms of assembly, part of the 30S ribosomal subunit. Forms a tight complex with proteins S10 and S14.

Its function is as follows. Binds the lower part of the 30S subunit head. Binds mRNA in the 70S ribosome, positioning it for translation. This Aromatoleum aromaticum (strain DSM 19018 / LMG 30748 / EbN1) (Azoarcus sp. (strain EbN1)) protein is Small ribosomal subunit protein uS3.